The following is a 273-amino-acid chain: Ribosomal RNA small subunit methyltransferase A (273 aa).

The S-adenosyl-L-methionine site is built by Asn-19, Leu-21, Gly-46, Glu-71, Asp-94, and Asn-117.

Belongs to the class I-like SAM-binding methyltransferase superfamily. rRNA adenine N(6)-methyltransferase family. RsmA subfamily.

Its subcellular location is the cytoplasm. It carries out the reaction adenosine(1518)/adenosine(1519) in 16S rRNA + 4 S-adenosyl-L-methionine = N(6)-dimethyladenosine(1518)/N(6)-dimethyladenosine(1519) in 16S rRNA + 4 S-adenosyl-L-homocysteine + 4 H(+). Specifically dimethylates two adjacent adenosines (A1518 and A1519) in the loop of a conserved hairpin near the 3'-end of 16S rRNA in the 30S particle. May play a critical role in biogenesis of 30S subunits. The chain is Ribosomal RNA small subunit methyltransferase A from Burkholderia ambifaria (strain MC40-6).